Here is a 237-residue protein sequence, read N- to C-terminus: Phosphoribosylaminoimidazole-succinocarboxamide synthase (237 aa).

Belongs to the SAICAR synthetase family.

It carries out the reaction 5-amino-1-(5-phospho-D-ribosyl)imidazole-4-carboxylate + L-aspartate + ATP = (2S)-2-[5-amino-1-(5-phospho-beta-D-ribosyl)imidazole-4-carboxamido]succinate + ADP + phosphate + 2 H(+). Its pathway is purine metabolism; IMP biosynthesis via de novo pathway; 5-amino-1-(5-phospho-D-ribosyl)imidazole-4-carboxamide from 5-amino-1-(5-phospho-D-ribosyl)imidazole-4-carboxylate: step 1/2. The protein is Phosphoribosylaminoimidazole-succinocarboxamide synthase of Listeria welshimeri serovar 6b (strain ATCC 35897 / DSM 20650 / CCUG 15529 / CIP 8149 / NCTC 11857 / SLCC 5334 / V8).